We begin with the raw amino-acid sequence, 302 residues long: MAAKELSHLQQLEAESIQIIREVAAEFDNPVMMYSIGKDSSVMLHLARKAFYPGKIPFPLLHVDTDWKFKEMIAFRDEQAKEFGFELLVHKNPEGLEMGISPFEHGSAKHTDIMKTQGLKQALNKYGFDAAFGGARRDEEKSRAKERVYSFRDKHHTWDPKNQRPELWRTYNGAVNKGESIRVFPLSNWTELDIWQYIYQENIQLVPLYFAQKRPVVERDGMMIMVDDDRMPLAEGEQPKEELVRFRTLGCYPLTGAMHSEADTLEKIIEEMLLTRSSERQGRLIDSDQSASMELKKRQGYF.

Belongs to the PAPS reductase family. CysD subfamily. Heterodimer composed of CysD, the smaller subunit, and CysN.

The enzyme catalyses sulfate + ATP + H(+) = adenosine 5'-phosphosulfate + diphosphate. It functions in the pathway sulfur metabolism; hydrogen sulfide biosynthesis; sulfite from sulfate: step 1/3. Functionally, with CysN forms the ATP sulfurylase (ATPS) that catalyzes the adenylation of sulfate producing adenosine 5'-phosphosulfate (APS) and diphosphate, the first enzymatic step in sulfur assimilation pathway. APS synthesis involves the formation of a high-energy phosphoric-sulfuric acid anhydride bond driven by GTP hydrolysis by CysN coupled to ATP hydrolysis by CysD. This Shewanella pealeana (strain ATCC 700345 / ANG-SQ1) protein is Sulfate adenylyltransferase subunit 2.